The sequence spans 475 residues: Ribulose bisphosphate carboxylase large chain (475 aa).

A propeptide spanning residues 1–2 is cleaved from the precursor; it reads MS. Pro3 bears the N-acetylproline mark. Lys14 is modified (N6,N6,N6-trimethyllysine). Positions 123 and 173 each coordinate substrate. Residue Lys175 is the Proton acceptor of the active site. Substrate is bound at residue Lys177. Mg(2+) is bound by residues Lys201, Asp203, and Glu204. Lys201 carries the N6-carboxylysine modification. His294 serves as the catalytic Proton acceptor. 3 residues coordinate substrate: Arg295, His327, and Ser379.

The protein belongs to the RuBisCO large chain family. Type I subfamily. Heterohexadecamer of 8 large chains and 8 small chains; disulfide-linked. The disulfide link is formed within the large subunit homodimers. It depends on Mg(2+) as a cofactor. In terms of processing, the disulfide bond which can form in the large chain dimeric partners within the hexadecamer appears to be associated with oxidative stress and protein turnover.

It is found in the plastid. Its subcellular location is the chloroplast. It carries out the reaction 2 (2R)-3-phosphoglycerate + 2 H(+) = D-ribulose 1,5-bisphosphate + CO2 + H2O. It catalyses the reaction D-ribulose 1,5-bisphosphate + O2 = 2-phosphoglycolate + (2R)-3-phosphoglycerate + 2 H(+). Its function is as follows. RuBisCO catalyzes two reactions: the carboxylation of D-ribulose 1,5-bisphosphate, the primary event in carbon dioxide fixation, as well as the oxidative fragmentation of the pentose substrate in the photorespiration process. Both reactions occur simultaneously and in competition at the same active site. This Viscum album (European mistletoe) protein is Ribulose bisphosphate carboxylase large chain.